We begin with the raw amino-acid sequence, 245 residues long: Lytic switch protein BZLF1 (245 aa).

The tract at residues 1–167 (MMDPNSTSED…RTRKPLQPES (167 aa)) is transactivation. Thr-14 and Thr-159 each carry phosphothreonine. A disordered region spans residues 145 to 167 (GAPQPAPAAAPARRTRKPLQPES). The Bipartite nuclear localization signal signature appears at 157 to 194 (RRTRKPLQPESLEECDSELEIKRYKNRVASRKCRAKFK). 3 positions are modified to phosphoserine: Ser-167, Ser-173, and Ser-186. The interval 178–195 (KRYKNRVASRKCRAKFKH) is basic motif. The 51-residue stretch at 178-228 (KRYKNRVASRKCRAKFKHLLQHYREVASAKSSENDRLRLLLKQMCPSLDVD) folds into the bZIP domain. Positions 196-228 (LLQHYREVASAKSSENDRLRLLLKQMCPSLDVD) are leucine-zipper. The tract at residues 229-245 (SIIPRTPDVLHEDLLNF) is accessory activation domain.

This sequence belongs to the bZIP family. Homodimer. Interacts (via b-ZIP domain) with the DNA polymerase processivity factor BMRF1 (via N-terminus); this interaction may inhibit BZLF1-induced transcription of the BMRF1 promoter. Interacts with human UBN1, CRTC2 and RACK1. Interacts (via N-terminus) with human PAX5 (via N-terminus); this interaction inhibits BZLF1-mediated lytic viral reactivation. Interacts (via leucine-zipper domain) with host CEBPA; this interaction induces G1 host cell cycle arrest. Interacts (via C-terminus) with host TP53BP1 (via C-terminus); this interaction is involved in the activation of the viral lytic cycle. Interacts with host chromatin-remodeling ATPase INO80; this interaction participates to the activation of early lytic viral genes by BZLF1. Interacts with host regulator of chromatin SMARCA5/hSNF2H; this interaction participates to the activation of early lytic viral genes by BZLF1. Interacts with host PLSCR1/Phospholipid scramblase 1; this interaction negatively regulates the transcriptional regulatory activity of BZLF1 by preventing the formation of the BZLF1-CBP complex.

It localises to the host nucleus. In terms of biological role, transcription factor that acts as a molecular switch to induce the transition from the latent to the lytic or productive phase of the virus cycle. Mediates the switch from the latent to the lytic cycle of infection in cells containing a highly methylated viral genome. Probably binds to silenced chromatin and recruits host chromatin-remodeling enzymes. Regulates this switch by binding to 2 types of ZEBRA response elements (ZREs): the CpG-free AP-1 like elements (latency) and the methylated CpG-containing elements (lytic replication). Activates preferentially the methylated forms of the viral lytic R (BRLF1) and Na (BRRF1) gene promoters, the latters being the first genes activated during Z-mediated reactivation in latently infected cells. BZLF1 and BRLF1 act together to trigger lytic replication. Also binds the lytic origin of replication, oriLyt. Induces G1 cell cycle arrest by stabilizing the host CCAAT/enhancer binding protein CEBPA. This function is important because the lytic cycle preferentially takes place in host cells arrested in G1. This is Lytic switch protein BZLF1 from Homo sapiens (Human).